The primary structure comprises 433 residues: 3-phosphoshikimate 1-carboxyvinyltransferase (433 aa).

Residues K22, S23, and R27 each coordinate 3-phosphoshikimate. K22 contacts phosphoenolpyruvate. 2 residues coordinate phosphoenolpyruvate: G95 and R123. Residues S167, Q169, D315, and K342 each contribute to the 3-phosphoshikimate site. Residue Q169 coordinates phosphoenolpyruvate. The active-site Proton acceptor is D315. Phosphoenolpyruvate is bound by residues R346 and R387.

It belongs to the EPSP synthase family. In terms of assembly, monomer.

Its subcellular location is the cytoplasm. The enzyme catalyses 3-phosphoshikimate + phosphoenolpyruvate = 5-O-(1-carboxyvinyl)-3-phosphoshikimate + phosphate. Its pathway is metabolic intermediate biosynthesis; chorismate biosynthesis; chorismate from D-erythrose 4-phosphate and phosphoenolpyruvate: step 6/7. Catalyzes the transfer of the enolpyruvyl moiety of phosphoenolpyruvate (PEP) to the 5-hydroxyl of shikimate-3-phosphate (S3P) to produce enolpyruvyl shikimate-3-phosphate and inorganic phosphate. This is 3-phosphoshikimate 1-carboxyvinyltransferase from Legionella pneumophila (strain Paris).